The primary structure comprises 277 residues: 2-dehydro-3-deoxyphosphooctonate aldolase (277 aa).

This sequence belongs to the KdsA family.

The protein localises to the cytoplasm. The enzyme catalyses D-arabinose 5-phosphate + phosphoenolpyruvate + H2O = 3-deoxy-alpha-D-manno-2-octulosonate-8-phosphate + phosphate. It functions in the pathway carbohydrate biosynthesis; 3-deoxy-D-manno-octulosonate biosynthesis; 3-deoxy-D-manno-octulosonate from D-ribulose 5-phosphate: step 2/3. Its pathway is bacterial outer membrane biogenesis; lipopolysaccharide biosynthesis. The protein is 2-dehydro-3-deoxyphosphooctonate aldolase of Dichelobacter nodosus (strain VCS1703A).